The primary structure comprises 123 residues: uncharacterized protein (123 aa).

This is an uncharacterized protein from Escherichia coli O157:H7.